Consider the following 192-residue polypeptide: Large ribosomal subunit protein bL9 (192 aa).

The tract at residues 172 to 192 (DALRPEDFFDPEADGVDEDEA) is disordered. A compositionally biased stretch (acidic residues) spans 179–192 (FFDPEADGVDEDEA).

This sequence belongs to the bacterial ribosomal protein bL9 family.

Functionally, binds to the 23S rRNA. In Rhizobium leguminosarum bv. trifolii (strain WSM2304), this protein is Large ribosomal subunit protein bL9.